The following is a 414-amino-acid chain: uncharacterized protein (414 aa).

3 disordered regions span residues 136–168 (SSKS…TVPT), 298–322 (KNFP…SYHR), and 350–382 (PPHS…MSTS).

This is an uncharacterized protein from Macaca fascicularis (Crab-eating macaque).